A 267-amino-acid chain; its full sequence is Orotidine 5'-phosphate decarboxylase (267 aa).

Residues aspartate 37, 59–61, 91–100, tyrosine 217, and arginine 235 contribute to the substrate site; these read KTH and DRKFADIGNT. Lysine 93 functions as the Proton donor in the catalytic mechanism.

Belongs to the OMP decarboxylase family.

The catalysed reaction is orotidine 5'-phosphate + H(+) = UMP + CO2. It participates in pyrimidine metabolism; UMP biosynthesis via de novo pathway; UMP from orotate: step 2/2. The polypeptide is Orotidine 5'-phosphate decarboxylase (URA3) (Eremothecium gossypii (strain ATCC 10895 / CBS 109.51 / FGSC 9923 / NRRL Y-1056) (Yeast)).